The primary structure comprises 177 residues: Large ribosomal subunit protein uL6 (177 aa).

Belongs to the universal ribosomal protein uL6 family. In terms of assembly, part of the 50S ribosomal subunit.

In terms of biological role, this protein binds to the 23S rRNA, and is important in its secondary structure. It is located near the subunit interface in the base of the L7/L12 stalk, and near the tRNA binding site of the peptidyltransferase center. This chain is Large ribosomal subunit protein uL6, found in Roseobacter denitrificans (strain ATCC 33942 / OCh 114) (Erythrobacter sp. (strain OCh 114)).